Consider the following 181-residue polypeptide: Organ-specific protein S2 (181 aa).

Tandem repeats lie at residues 59–84, 85–110, 111–136, and 137–162. The segment at 59-162 is 4 X 26 AA tandem repeats; the sequence is HAKENMGAIG…NASAYGDNEI (104 aa). The segment at 94–181 is disordered; the sequence is GEFEPRPNAS…PRPSMTKYNA (88 aa).

It to organ specific protein P4. In terms of tissue distribution, expressed in stems.

This Pisum sativum (Garden pea) protein is Organ-specific protein S2.